We begin with the raw amino-acid sequence, 167 residues long: Mediator of RNA polymerase II transcription subunit 10 (167 aa).

Residues Leu53 to Ile88 are disordered.

This sequence belongs to the Mediator complex subunit 10 family. In terms of assembly, component of the Mediator complex.

The protein resides in the nucleus. Component of the Mediator complex, a coactivator involved in the regulated transcription of nearly all RNA polymerase II-dependent genes. Mediator functions as a bridge to convey information from gene-specific regulatory proteins to the basal RNA polymerase II transcription machinery. Mediator is recruited to promoters by direct interactions with regulatory proteins and serves as a scaffold for the assembly of a functional preinitiation complex with RNA polymerase II and the general transcription factors. This chain is Mediator of RNA polymerase II transcription subunit 10 (nut2), found in Neosartorya fischeri (strain ATCC 1020 / DSM 3700 / CBS 544.65 / FGSC A1164 / JCM 1740 / NRRL 181 / WB 181) (Aspergillus fischerianus).